The primary structure comprises 319 residues: Methionyl-tRNA formyltransferase (319 aa).

A (6S)-5,6,7,8-tetrahydrofolate-binding site is contributed by 113–116 (SLLP).

This sequence belongs to the Fmt family.

The enzyme catalyses L-methionyl-tRNA(fMet) + (6R)-10-formyltetrahydrofolate = N-formyl-L-methionyl-tRNA(fMet) + (6S)-5,6,7,8-tetrahydrofolate + H(+). Its function is as follows. Attaches a formyl group to the free amino group of methionyl-tRNA(fMet). The formyl group appears to play a dual role in the initiator identity of N-formylmethionyl-tRNA by promoting its recognition by IF2 and preventing the misappropriation of this tRNA by the elongation apparatus. This Pseudomonas fluorescens (strain ATCC BAA-477 / NRRL B-23932 / Pf-5) protein is Methionyl-tRNA formyltransferase.